Consider the following 381-residue polypeptide: Queuine tRNA-ribosyltransferase (381 aa).

Residue aspartate 92 is the Proton acceptor of the active site. Residues 92-96 (DSGGF), aspartate 146, glutamine 190, and glycine 217 each bind substrate. The interval 248-254 (GVGRPED) is RNA binding. The Nucleophile role is filled by aspartate 267. The RNA binding; important for wobble base 34 recognition stretch occupies residues 272–276 (TRNAR). Residues cysteine 305, cysteine 307, cysteine 310, and histidine 337 each contribute to the Zn(2+) site.

The protein belongs to the queuine tRNA-ribosyltransferase family. Homodimer. Within each dimer, one monomer is responsible for RNA recognition and catalysis, while the other monomer binds to the replacement base PreQ1. Zn(2+) is required as a cofactor.

The catalysed reaction is 7-aminomethyl-7-carbaguanine + guanosine(34) in tRNA = 7-aminomethyl-7-carbaguanosine(34) in tRNA + guanine. It participates in tRNA modification; tRNA-queuosine biosynthesis. In terms of biological role, catalyzes the base-exchange of a guanine (G) residue with the queuine precursor 7-aminomethyl-7-deazaguanine (PreQ1) at position 34 (anticodon wobble position) in tRNAs with GU(N) anticodons (tRNA-Asp, -Asn, -His and -Tyr). Catalysis occurs through a double-displacement mechanism. The nucleophile active site attacks the C1' of nucleotide 34 to detach the guanine base from the RNA, forming a covalent enzyme-RNA intermediate. The proton acceptor active site deprotonates the incoming PreQ1, allowing a nucleophilic attack on the C1' of the ribose to form the product. After dissociation, two additional enzymatic reactions on the tRNA convert PreQ1 to queuine (Q), resulting in the hypermodified nucleoside queuosine (7-(((4,5-cis-dihydroxy-2-cyclopenten-1-yl)amino)methyl)-7-deazaguanosine). This chain is Queuine tRNA-ribosyltransferase, found in Xanthomonas campestris pv. campestris (strain 8004).